The sequence spans 592 residues: Bifunctional purine biosynthesis protein ADE17 (592 aa).

The 147-residue stretch at 1–147 (MANYTKTAIL…KNHARVTILS (147 aa)) folds into the MGS-like domain. Residues 35-38 (SGGT), 65-68 (RVKT), 102-103 (CN), and 126-127 (DI) each bind IMP. Residue Lys-138 is the Proton donor/acceptor; for FAICAR cyclization activity of the active site. Residues 206–207 (RY), His-267, Gly-315, Asp-338, Asn-430, and Arg-450 each bind 5-amino-1-(5-phospho-beta-D-ribosyl)imidazole-4-carboxamide. His-267 functions as the Proton acceptor; for AICAR formyltransferase activity in the catalytic mechanism. Residue Ile-451 participates in (6R)-10-formyltetrahydrofolate binding. Residue Phe-541 coordinates 5-amino-1-(5-phospho-beta-D-ribosyl)imidazole-4-carboxamide. Residues Asp-546 and 565–566 (SV) each bind (6R)-10-formyltetrahydrofolate. Residue Arg-588 participates in 5-amino-1-(5-phospho-beta-D-ribosyl)imidazole-4-carboxamide binding.

Belongs to the PurH family. In terms of assembly, homodimer.

The protein localises to the cytoplasm. The protein resides in the cytosol. It catalyses the reaction (6R)-10-formyltetrahydrofolate + 5-amino-1-(5-phospho-beta-D-ribosyl)imidazole-4-carboxamide = 5-formamido-1-(5-phospho-D-ribosyl)imidazole-4-carboxamide + (6S)-5,6,7,8-tetrahydrofolate. The enzyme catalyses IMP + H2O = 5-formamido-1-(5-phospho-D-ribosyl)imidazole-4-carboxamide. Its pathway is purine metabolism; IMP biosynthesis via de novo pathway; 5-formamido-1-(5-phospho-D-ribosyl)imidazole-4-carboxamide from 5-amino-1-(5-phospho-D-ribosyl)imidazole-4-carboxamide (10-formyl THF route): step 1/1. The protein operates within purine metabolism; IMP biosynthesis via de novo pathway; IMP from 5-formamido-1-(5-phospho-D-ribosyl)imidazole-4-carboxamide: step 1/1. In terms of biological role, bifunctional enzyme that catalyzes the last two steps of purine biosynthesis. Acts as a transformylase that incorporates a formyl group to the AMP analog AICAR (5-amino-1-(5-phospho-beta-D-ribosyl)imidazole-4-carboxamide) to produce the intermediate formyl-AICAR (FAICAR). Also catalyzes the cyclization of FAICAR to IMP. In Saccharomyces cerevisiae (strain ATCC 204508 / S288c) (Baker's yeast), this protein is Bifunctional purine biosynthesis protein ADE17.